A 212-amino-acid chain; its full sequence is Uracil phosphoribosyltransferase (212 aa).

Residues Arg-78, Arg-103, and 130 to 138 contribute to the 5-phospho-alpha-D-ribose 1-diphosphate site; that span reads DPMLATGGS. Residues Ile-193 and 198 to 200 contribute to the uracil site; that span reads GDA. A 5-phospho-alpha-D-ribose 1-diphosphate-binding site is contributed by Asp-199.

The protein belongs to the UPRTase family. The cofactor is Mg(2+).

It carries out the reaction UMP + diphosphate = 5-phospho-alpha-D-ribose 1-diphosphate + uracil. It participates in pyrimidine metabolism; UMP biosynthesis via salvage pathway; UMP from uracil: step 1/1. Its activity is regulated as follows. Allosterically activated by GTP. Its function is as follows. Catalyzes the conversion of uracil and 5-phospho-alpha-D-ribose 1-diphosphate (PRPP) to UMP and diphosphate. The sequence is that of Uracil phosphoribosyltransferase from Azotobacter vinelandii (strain DJ / ATCC BAA-1303).